The chain runs to 361 residues: MSGNGGAATTAEENGSKMRVIRVGTRKSQLARIQTDTVVAMLKALYPGIQFEIIAMSTTGDKILDTALSKIGEKSLFTKELENALEKNEVDLVVHSLKDVPTILPPGFTIGAICKRENPCDAVVFHPKFIGKTLETLPEKSAVGTSSLRRVAQLQRKFPHLEFKSIRGNLNTRLRKLDELQEFSAIVLAVAGLQRMGWQNRVGQILHPEECMYAVGQGALAVEVRAKDQDILDLVSVLHDPETLLRCIAERAFLRHLEGGCSVPVAVHTVMKDGQLYLTGGVWSLDGSDSMQETMQATIQVPVQQEDGPEDDPQLVGITARNIPRGAQLAAENLGISLASLLLNKGAKNILDVARQLNDVR.

S2 carries the post-translational modification N-acetylserine. S69 carries the phosphoserine modification. Residue K74 is modified to N6-acetyllysine. Residue S147 is modified to Phosphoserine. C261 carries the post-translational modification S-(dipyrrolylmethanemethyl)cysteine.

It belongs to the HMBS family. As to quaternary structure, monomer. Dipyrromethane serves as cofactor.

It localises to the cytoplasm. Its subcellular location is the cytosol. It catalyses the reaction 4 porphobilinogen + H2O = hydroxymethylbilane + 4 NH4(+). It functions in the pathway porphyrin-containing compound metabolism; protoporphyrin-IX biosynthesis; coproporphyrinogen-III from 5-aminolevulinate: step 2/4. Its function is as follows. As part of the heme biosynthetic pathway, catalyzes the sequential polymerization of four molecules of porphobilinogen to form hydroxymethylbilane, also known as preuroporphyrinogen. Catalysis begins with the assembly of the dipyrromethane cofactor by the apoenzyme from two molecules of porphobilinogen or from preuroporphyrinogen. The covalently linked cofactor acts as a primer, around which the tetrapyrrole product is assembled. In the last step of catalysis, the product, preuroporphyrinogen, is released, leaving the cofactor bound to the holodeaminase intact. The chain is Porphobilinogen deaminase (Hmbs) from Mus musculus (Mouse).